The sequence spans 85 residues: U4-theraphotoxin-Hhn1g (85 aa).

The first 22 residues, 1–22 (MKVTLIAILTCAAVLVLHTTAA), serve as a signal peptide directing secretion. Positions 23-48 (EELEAESQLMEVGMPDTELAAVDEER) are excised as a propeptide. 3 disulfides stabilise this stretch: cysteine 52/cysteine 66, cysteine 56/cysteine 77, and cysteine 71/cysteine 82.

It belongs to the neurotoxin 12 (Hwtx-2) family. 02 (Hwtx-2) subfamily. As to expression, expressed by the venom gland.

It is found in the secreted. Its function is as follows. Postsynaptic neurotoxin. This is U4-theraphotoxin-Hhn1g from Cyriopagopus hainanus (Chinese bird spider).